A 465-amino-acid polypeptide reads, in one-letter code: Poly(A) polymerase I (465 aa).

Catalysis depends on residues Asp80, Asp82, and Asp162. Positions 430–465 are disordered; that stretch reads APPEQKGMLNELDDDPAPRRRRSRPRKRAPRREGTV. Residues 448–459 show a composition bias toward basic residues; that stretch reads RRRRSRPRKRAP.

The protein belongs to the tRNA nucleotidyltransferase/poly(A) polymerase family.

It catalyses the reaction RNA(n) + ATP = RNA(n)-3'-adenine ribonucleotide + diphosphate. In terms of biological role, adds poly(A) tail to the 3' end of many RNAs, which usually targets these RNAs for decay. Plays a significant role in the global control of gene expression, through influencing the rate of transcript degradation, and in the general RNA quality control. The protein is Poly(A) polymerase I of Salmonella typhi.